An 86-amino-acid polypeptide reads, in one-letter code: Apolipoprotein C-I (86 aa).

Residues 1–26 form the signal peptide; that stretch reads MRLFLSLPVLVVALLTILEGPGPAQG.

This sequence belongs to the apolipoprotein C1 family.

The protein resides in the secreted. Inhibitor of lipoprotein binding to the low density lipoprotein (LDL) receptor, LDL receptor-related protein, and very low density lipoprotein (VLDL) receptor. Associates with high density lipoproteins (HDL) and the triacylglycerol-rich lipoproteins in the plasma and makes up about 10% of the protein of the VLDL and 2% of that of HDL. Appears to interfere directly with fatty acid uptake and is also the major plasma inhibitor of cholesteryl ester transfer protein (CETP). Binds free fatty acids and reduces their intracellular esterification. Modulates the interaction of APOE with beta-migrating VLDL and inhibits binding of beta-VLDL to the LDL receptor-related protein. This chain is Apolipoprotein C-I (APOC1), found in Plecturocebus moloch (Dusky titi monkey).